The chain runs to 998 residues: UPF0182 protein AAur_2732 (998 aa).

7 helical membrane passes run 18–38 (GALTPTLIVVAVAVVGFIFFA), 64–84 (IITFLIGFAMMFAAVFFAIRI), 115–135 (VVMIGLPILFGLFAGSAAASQ), 168–188 (FLGFITGFLISIAVVAGIAGI), 211–231 (QIHIAVTGALFLILLGVNFWL), 260–280 (AILAVAAGLVAILFIIAAIIG), and 287–307 (IGTAMLVITAILAGGVYPWVI). 3 disordered regions span residues 490-518 (GAPDGAPNREQDRPAGREGGGETQYTFSG), 888-923 (LFGGDSGATAGDSDNNGQTPTSPPGTTPPPAGPTDA), and 971-998 (QARLDATPAPTATPGATPSATPSPSPSS). Over residues 496–509 (PNREQDRPAGREGG) the composition is skewed to basic and acidic residues. The span at 908 to 919 (TSPPGTTPPPAG) shows a compositional bias: pro residues. Residues 976 to 990 (ATPAPTATPGATPSA) are compositionally biased toward low complexity.

This sequence belongs to the UPF0182 family.

It localises to the cell membrane. The chain is UPF0182 protein AAur_2732 from Paenarthrobacter aurescens (strain TC1).